Consider the following 814-residue polypeptide: Protein ADP-ribosyltransferase PARP3 (814 aa).

Composition is skewed to basic and acidic residues over residues 1–19 (MKVH…EQKG) and 27–48 (EGKL…DDGR). A disordered region spans residues 1–52 (MKVHETRSHAHMSGDEQKGNLRKHKAEGKLPESEQSQKKAKPENDDGRSVNG). Residues 38–186 (KKAKPENDDG…KRELGSADKP (149 aa)) form the PADR1 zinc-binding domain. The tract at residues 105–150 (GALAKCPLCGGTLICDNEKRFVCGGEISEWCSCVFSTKDPPRKEEP) is zinc ribbon. Residues C110, C113, C127, and C137 each coordinate Zn(2+). TPR repeat units follow at residues 182–215 (SADK…NGGK) and 277–310 (DLSV…YGKR). In terms of domain architecture, BRCT spans 187–274 (FVGMMISLMG…EAQPLEAYDV (88 aa)). The 101-residue stretch at 322–422 (GGKIFEKDGL…KKIQKKPHKF (101 aa)) folds into the WGR domain. Residues 449–568 (HCKLDSFVAN…DINTASRLIG (120 aa)) form the PARP alpha-helical domain. Residues 577–808 (DPLSDRYKKL…VKYEEKGTEI (232 aa)) form the PARP catalytic domain.

Belongs to the ARTD/PARP family.

It is found in the nucleus. The catalysed reaction is L-aspartyl-[protein] + NAD(+) = 4-O-(ADP-D-ribosyl)-L-aspartyl-[protein] + nicotinamide. It catalyses the reaction L-glutamyl-[protein] + NAD(+) = 5-O-(ADP-D-ribosyl)-L-glutamyl-[protein] + nicotinamide. Involved in the base excision repair (BER) pathway, by catalyzing the poly(ADP-ribosyl)ation of a limited number of acceptor proteins involved in chromatin architecture and in DNA metabolism. This modification follows DNA damages and appears as an obligatory step in a detection/signaling pathway leading to the reparation of DNA strand breaks. This chain is Protein ADP-ribosyltransferase PARP3 (PARP3), found in Arabidopsis thaliana (Mouse-ear cress).